Reading from the N-terminus, the 327-residue chain is Serpentine receptor class alpha-12 (327 aa).

Residues 1-18 (MGCASEIQAEIFTSFGQL) are Extracellular-facing. Residues 19-39 (FYASFQTILFLATIIGSLLAI) traverse the membrane as a helical segment. The Cytoplasmic portion of the chain corresponds to 40-53 (FELCKKTTVPDSTR). A helical transmembrane segment spans residues 54-74 (VLLIGSLFFANAHEFAYFTAP). The Extracellular portion of the chain corresponds to 75 to 98 (LKVFQLNIFNTNTSCYPLISTRDC). The helical transmembrane segment at 99 to 119 (IPTTTVLAMGISGNMLIQSAL) threads the bilayer. Over 120 to 138 (SIDRLLATIFPFSYSRMRA) the chain is Cytoplasmic. A helical transmembrane segment spans residues 139–159 (LPGFVLLIMVLIPAMFTYSWI). Topologically, residues 160 to 185 (RLDIVLDDYQMFCSQWSANISTRANT) are extracellular. The chain crosses the membrane as a helical span at residues 186-206 (FLEICSYLTVAHIIINCLIIL). The Cytoplasmic segment spans residues 207 to 234 (RNRAIEKRCRFDVTQRYLTSENLKTTQA). The chain crosses the membrane as a helical span at residues 235-255 (ICYLSIAQFLAMFMYSGGVLL). The Extracellular portion of the chain corresponds to 256 to 270 (MRKNRENIPTLIYFN). The chain crosses the membrane as a helical span at residues 271-291 (VIVWVYAPPYACVSLAPLILF). Residues 292–327 (SLWNLKKQRHIQIKSVQSAQKETQDDYIRKLQKSWK) lie on the Cytoplasmic side of the membrane.

The protein belongs to the nematode receptor-like protein sra family. In terms of tissue distribution, expressed in neurons RIF/RIG and PVT.

The protein localises to the membrane. The polypeptide is Serpentine receptor class alpha-12 (sra-12) (Caenorhabditis elegans).